The primary structure comprises 105 residues: Large ribosomal subunit protein bL21 (105 aa).

It belongs to the bacterial ribosomal protein bL21 family. Part of the 50S ribosomal subunit. Contacts protein L20.

Functionally, this protein binds to 23S rRNA in the presence of protein L20. The sequence is that of Large ribosomal subunit protein bL21 from Thermotoga maritima (strain ATCC 43589 / DSM 3109 / JCM 10099 / NBRC 100826 / MSB8).